The chain runs to 159 residues: Odorant-binding protein (159 aa).

Belongs to the calycin superfamily. Lipocalin family. Homodimer.

The protein localises to the secreted. In terms of biological role, this protein binds a wide variety of chemical odorants. This chain is Odorant-binding protein, found in Bos taurus (Bovine).